We begin with the raw amino-acid sequence, 219 residues long: ATP-dependent Clp protease proteolytic subunit 1 (219 aa).

S113 functions as the Nucleophile in the catalytic mechanism. H138 is a catalytic residue.

Belongs to the peptidase S14 family. In terms of assembly, fourteen ClpP subunits assemble into 2 heptameric rings which stack back to back to give a disk-like structure with a central cavity, resembling the structure of eukaryotic proteasomes.

It is found in the cytoplasm. It carries out the reaction Hydrolysis of proteins to small peptides in the presence of ATP and magnesium. alpha-casein is the usual test substrate. In the absence of ATP, only oligopeptides shorter than five residues are hydrolyzed (such as succinyl-Leu-Tyr-|-NHMec, and Leu-Tyr-Leu-|-Tyr-Trp, in which cleavage of the -Tyr-|-Leu- and -Tyr-|-Trp bonds also occurs).. Its function is as follows. Cleaves peptides in various proteins in a process that requires ATP hydrolysis. Has a chymotrypsin-like activity. Plays a major role in the degradation of misfolded proteins. Probably partially responsible for degradation of ECF sigma factor SigR prime. This is ATP-dependent Clp protease proteolytic subunit 1 from Streptomyces coelicolor (strain ATCC BAA-471 / A3(2) / M145).